Consider the following 225-residue polypeptide: Ribose-5-phosphate isomerase A (225 aa).

Substrate-binding positions include threonine 33–threonine 36, aspartate 84–aspartate 87, and lysine 96–glycine 99. The Proton acceptor role is filled by glutamate 105. Lysine 123 provides a ligand contact to substrate.

This sequence belongs to the ribose 5-phosphate isomerase family. Homodimer.

It catalyses the reaction aldehydo-D-ribose 5-phosphate = D-ribulose 5-phosphate. It functions in the pathway carbohydrate degradation; pentose phosphate pathway; D-ribose 5-phosphate from D-ribulose 5-phosphate (non-oxidative stage): step 1/1. In terms of biological role, catalyzes the reversible conversion of ribose-5-phosphate to ribulose 5-phosphate. The protein is Ribose-5-phosphate isomerase A of Halobacterium salinarum (strain ATCC 29341 / DSM 671 / R1).